The primary structure comprises 199 residues: Recombination protein RecR (199 aa).

Residues 58–73 (CQRCNNFSEEAVCQRC) form a C4-type zinc finger. The 96-residue stretch at 81–176 (ATLCVVEMPA…KVSRISRGVP (96 aa)) folds into the Toprim domain.

Belongs to the RecR family.

May play a role in DNA repair. It seems to be involved in an RecBC-independent recombinational process of DNA repair. It may act with RecF and RecO. The chain is Recombination protein RecR from Azoarcus sp. (strain BH72).